The following is a 222-amino-acid chain: DUF1769 family protein (222 aa).

It belongs to the UPF0590 family.

Its subcellular location is the cytoplasm. The protein localises to the nucleus. This chain is DUF1769 family protein, found in Schizosaccharomyces pombe (strain 972 / ATCC 24843) (Fission yeast).